We begin with the raw amino-acid sequence, 324 residues long: Phospho-N-acetylmuramoyl-pentapeptide-transferase (324 aa).

The next 10 helical transmembrane spans lie at threonine 9–valine 29, threonine 53–isoleucine 73, valine 77–leucine 97, phenylalanine 117–alanine 137, isoleucine 147–serine 167, leucine 176–phenylalanine 196, methionine 201–asparagine 221, isoleucine 227–leucine 247, leucine 253–phenylalanine 273, and valine 304–phenylalanine 324.

This sequence belongs to the glycosyltransferase 4 family. MraY subfamily. Mg(2+) is required as a cofactor.

The protein resides in the cell membrane. It catalyses the reaction UDP-N-acetyl-alpha-D-muramoyl-L-alanyl-gamma-D-glutamyl-meso-2,6-diaminopimeloyl-D-alanyl-D-alanine + di-trans,octa-cis-undecaprenyl phosphate = di-trans,octa-cis-undecaprenyl diphospho-N-acetyl-alpha-D-muramoyl-L-alanyl-D-glutamyl-meso-2,6-diaminopimeloyl-D-alanyl-D-alanine + UMP. It functions in the pathway cell wall biogenesis; peptidoglycan biosynthesis. Functionally, catalyzes the initial step of the lipid cycle reactions in the biosynthesis of the cell wall peptidoglycan: transfers peptidoglycan precursor phospho-MurNAc-pentapeptide from UDP-MurNAc-pentapeptide onto the lipid carrier undecaprenyl phosphate, yielding undecaprenyl-pyrophosphoryl-MurNAc-pentapeptide, known as lipid I. The chain is Phospho-N-acetylmuramoyl-pentapeptide-transferase from Listeria monocytogenes serotype 4b (strain CLIP80459).